Consider the following 483-residue polypeptide: 6-phosphogluconate dehydrogenase, decarboxylating (483 aa).

Residues glycine 10–glycine 15 and asparagine 33–threonine 35 contribute to the NADP(+) site. Lysine 38 is modified (N6-acetyllysine). Phosphoserine is present on serine 57. Residue lysine 59 is modified to N6-acetyllysine. NADP(+) contacts are provided by residues valine 75–alanine 77 and asparagine 103. Substrate is bound by residues asparagine 103 and serine 129–glycine 131. Position 129 is a phosphoserine (serine 129). The Proton acceptor role is filled by lysine 184. Histidine 187–asparagine 188 contacts substrate. Glutamate 191 serves as the catalytic Proton donor. Tyrosine 192, lysine 261, arginine 288, arginine 447, and histidine 453 together coordinate substrate. Residue serine 478–tyrosine 481 participates in NADP(+) binding.

This sequence belongs to the 6-phosphogluconate dehydrogenase family. Homodimer.

It is found in the cytoplasm. The catalysed reaction is 6-phospho-D-gluconate + NADP(+) = D-ribulose 5-phosphate + CO2 + NADPH. The protein operates within carbohydrate degradation; pentose phosphate pathway; D-ribulose 5-phosphate from D-glucose 6-phosphate (oxidative stage): step 3/3. In terms of biological role, catalyzes the oxidative decarboxylation of 6-phosphogluconate to ribulose 5-phosphate and CO(2), with concomitant reduction of NADP to NADPH. This chain is 6-phosphogluconate dehydrogenase, decarboxylating, found in Rattus norvegicus (Rat).